Here is a 150-residue protein sequence, read N- to C-terminus: 3-dehydroquinate dehydratase (150 aa).

The active-site Proton acceptor is Y26. Substrate contacts are provided by N77, H83, and D90. The active-site Proton donor is H103. Substrate-binding positions include 104–105 (LS) and R114.

Belongs to the type-II 3-dehydroquinase family. In terms of assembly, homododecamer.

The enzyme catalyses 3-dehydroquinate = 3-dehydroshikimate + H2O. It participates in metabolic intermediate biosynthesis; chorismate biosynthesis; chorismate from D-erythrose 4-phosphate and phosphoenolpyruvate: step 3/7. Its function is as follows. Catalyzes a trans-dehydration via an enolate intermediate. This Erwinia tasmaniensis (strain DSM 17950 / CFBP 7177 / CIP 109463 / NCPPB 4357 / Et1/99) protein is 3-dehydroquinate dehydratase.